A 264-amino-acid polypeptide reads, in one-letter code: Acyl-[acyl-carrier-protein]--UDP-N-acetylglucosamine O-acyltransferase (264 aa).

The protein belongs to the transferase hexapeptide repeat family. LpxA subfamily. As to quaternary structure, homotrimer.

It is found in the cytoplasm. It carries out the reaction a (3R)-hydroxyacyl-[ACP] + UDP-N-acetyl-alpha-D-glucosamine = a UDP-3-O-[(3R)-3-hydroxyacyl]-N-acetyl-alpha-D-glucosamine + holo-[ACP]. Its pathway is glycolipid biosynthesis; lipid IV(A) biosynthesis; lipid IV(A) from (3R)-3-hydroxytetradecanoyl-[acyl-carrier-protein] and UDP-N-acetyl-alpha-D-glucosamine: step 1/6. Involved in the biosynthesis of lipid A, a phosphorylated glycolipid that anchors the lipopolysaccharide to the outer membrane of the cell. The polypeptide is Acyl-[acyl-carrier-protein]--UDP-N-acetylglucosamine O-acyltransferase (Rickettsia prowazekii (strain Madrid E)).